The sequence spans 600 residues: Elongation factor 4 (600 aa).

The tr-type G domain occupies 5-187 (KYIRNFSIVA…EIVEKVPAPE (183 aa)). Residues 17-22 (DHGKST) and 134-137 (NKVD) each bind GTP.

This sequence belongs to the TRAFAC class translation factor GTPase superfamily. Classic translation factor GTPase family. LepA subfamily.

Its subcellular location is the cell membrane. It carries out the reaction GTP + H2O = GDP + phosphate + H(+). Functionally, required for accurate and efficient protein synthesis under certain stress conditions. May act as a fidelity factor of the translation reaction, by catalyzing a one-codon backward translocation of tRNAs on improperly translocated ribosomes. Back-translocation proceeds from a post-translocation (POST) complex to a pre-translocation (PRE) complex, thus giving elongation factor G a second chance to translocate the tRNAs correctly. Binds to ribosomes in a GTP-dependent manner. In Clostridium perfringens (strain ATCC 13124 / DSM 756 / JCM 1290 / NCIMB 6125 / NCTC 8237 / Type A), this protein is Elongation factor 4.